The chain runs to 201 residues: RILP-like protein 2 (201 aa).

The RH1 domain maps to 14-108; sequence GPEIALDKDP…LKDGPQMGVG (95 aa). Residues 67-155 adopt a coiled-coil conformation; the sequence is LEMLEALVNQ…AQDELQCYKS (89 aa). The 77-residue stretch at 121 to 197 folds into the RH2 domain; that stretch reads RPRFTLQELR…TVKSLFSFKQ (77 aa). The segment at 177-201 is disordered; it reads SPRENESKEKSTVKSLFSFKQGKQT. The segment covering 179-188 has biased composition (basic and acidic residues); sequence RENESKEKST.

This sequence belongs to the RILPL family.

It localises to the cytoplasm. Its subcellular location is the cytosol. The protein localises to the cytoskeleton. The protein resides in the microtubule organizing center. It is found in the centrosome. It localises to the cell projection. Its subcellular location is the cilium. Its function is as follows. Involved in cell shape and neuronal morphogenesis, positively regulating the establishment and maintenance of dendritic spines. Plays a role in cellular protein transport. The chain is RILP-like protein 2 (rilpl2) from Xenopus tropicalis (Western clawed frog).